Here is a 917-residue protein sequence, read N- to C-terminus: Major intrinsically disordered Notch2-binding receptor 1 (917 aa).

At 1–892 (MEANQEASLF…AEFRRAKVCK (892 aa)) the chain is on the cytoplasmic side. 7 disordered regions span residues 337-367 (STYF…WPAK), 388-410 (PSEE…GPDR), 461-483 (SCTS…QHVL), 568-588 (ITNG…NVHH), 652-687 (SEAP…CSDA), 706-727 (TRPS…IASI), and 746-783 (NEEE…LPKQ). Over residues 461-480 (SCTSGQHSSDTSSVGTQTEQ) the composition is skewed to polar residues. Basic and acidic residues predominate over residues 576-588 (KGDKCNRPENVHH). Phosphoserine is present on serine 712. Residues 893 to 913 (IAALITAAACTVILVIVVPIC) form a helical membrane-spanning segment. At 914–917 (TMKS) the chain is on the extracellular side.

It belongs to the MINAR family. Interacts with NOTCH2; this interaction increases MINAR1 stability. Interacts (via N-terminus) with DEPTOR (via PDZ domain); this interaction may stabilize DEPTOR protein by impairing its ubiquitination. As to expression, expressed in brain and in islets of Langerhans.

The protein resides in the cell membrane. Intrinsically disordered protein which may negatively regulate mTOR signaling pathway by stabilizing the mTOR complex component DEPTOR. Negatively regulates angiogenesis. Negatively regulates cell growth. Negatively regulates neurite outgrowth in hippocampal neurons. The chain is Major intrinsically disordered Notch2-binding receptor 1 (Minar1) from Mus musculus (Mouse).